A 94-amino-acid polypeptide reads, in one-letter code: U27-theraphotoxin-Cg1a (94 aa).

A signal peptide spans 1–22 (MIFLLPPVIFVMLLAESVLILG). Residues 23 to 58 (DSEDADLMEMVQMSRPFFNPIIPAVEFVDLREERQR) constitute a propeptide that is removed on maturation. Cystine bridges form between Cys-60-Cys-78, Cys-67-Cys-83, and Cys-77-Cys-88.

This sequence belongs to the neurotoxin 14 (magi-1) family. OAIP-1 subfamily. In terms of tissue distribution, expressed by the venom gland.

It is found in the secreted. Functionally, probable ion channel inhibitor. This is U27-theraphotoxin-Cg1a from Chilobrachys guangxiensis (Chinese earth tiger tarantula).